Consider the following 302-residue polypeptide: Vomeronasal type-1 receptor 48 (302 aa).

The Extracellular segment spans residues 1 to 16 (MNENSRLHTHSNIRNT). Residues 17-37 (FFSEIGIGISGNSFLLLFHII) form a helical membrane-spanning segment. The Cytoplasmic segment spans residues 38–49 (KFFRGHRPRLTD). Residues 50 to 70 (LPIGLLSLIHLLMLLVAAVIA) form a helical membrane-spanning segment. Over 71–91 (TDIFISWRGWNDIICKFLVYL) the chain is Extracellular. An intrachain disulfide couples Cys85 to Cys172. A helical membrane pass occupies residues 92–114 (YRSLRGLSLCTTSMLSVLQAIIL). Topologically, residues 115–131 (SPRSYCLAKFKRKSSHN) are cytoplasmic. Residues 132 to 152 (ISCAIIFLSVLYMSISSHLLI) traverse the membrane as a helical segment. Topologically, residues 153 to 193 (SITATPNLTMNDFLYVSQSCSLLPLSYLMQSIYSTLLVLRE) are extracellular. Asn159 carries an N-linked (GlcNAc...) asparagine glycan. A helical membrane pass occupies residues 194–214 (VFLIGLMVLSTSYMVALLYMH). At 215-238 (RKQAQNLQGTSLSLKASAEQRATQ) the chain is on the cytoplasmic side. Residues 239–259 (TILMLMTFFVLMSIFDSIVSC) traverse the membrane as a helical segment. At 260 to 269 (SRTMFLDDPT) the chain is on the extracellular side. The helical transmembrane segment at 270–290 (SYSIHIFVMHIYATVSPFVFI) threads the bilayer. The Cytoplasmic segment spans residues 291–302 (STEKHIVNILRG).

This sequence belongs to the G-protein coupled receptor 1 family.

The protein localises to the cell membrane. Its function is as follows. Putative pheromone receptor implicated in the regulation of social and reproductive behavior. The chain is Vomeronasal type-1 receptor 48 (Vmn1r48) from Mus musculus (Mouse).